We begin with the raw amino-acid sequence, 293 residues long: Acetylglutamate kinase (293 aa).

Residues 68 to 69 (GG), Arg90, and Asn189 each bind substrate.

It belongs to the acetylglutamate kinase family. ArgB subfamily.

It localises to the cytoplasm. The catalysed reaction is N-acetyl-L-glutamate + ATP = N-acetyl-L-glutamyl 5-phosphate + ADP. It functions in the pathway amino-acid biosynthesis; L-arginine biosynthesis; N(2)-acetyl-L-ornithine from L-glutamate: step 2/4. Catalyzes the ATP-dependent phosphorylation of N-acetyl-L-glutamate. The protein is Acetylglutamate kinase of Caldicellulosiruptor saccharolyticus (strain ATCC 43494 / DSM 8903 / Tp8T 6331).